The chain runs to 280 residues: Homeobox protein SMOX-1 (280 aa).

The segment at 61 to 88 (PNNNSFQLNTTNDSNNNNTTNNGNDSRS) is disordered. The span at 69 to 85 (NTTNDSNNNNTTNNGND) shows a compositional bias: low complexity. Positions 214–219 (VYPWMN) match the Antp-type hexapeptide motif. Residues 229–280 (QKRTRQTYTRYQTLELEKEFHFNKYLTRRRRIEIAHTLTLTERQIKIWFQNR) constitute a DNA-binding region (homeobox).

The protein belongs to the Antp homeobox family.

Its subcellular location is the nucleus. This is Homeobox protein SMOX-1 (SMOX-1) from Schistosoma mansoni (Blood fluke).